The following is a 560-amino-acid chain: Serine/threonine-protein kinase TOS3 (560 aa).

Residues 50 to 344 enclose the Protein kinase domain; sequence FEILATLGNG…LADIKVHPFM (295 aa). ATP-binding positions include 56-64 and K79; that span reads LGNGQYGKV. The active-site Proton acceptor is the D189.

The protein belongs to the protein kinase superfamily. Ser/Thr protein kinase family. Post-translationally, autophosphorylated.

The enzyme catalyses L-seryl-[protein] + ATP = O-phospho-L-seryl-[protein] + ADP + H(+). It catalyses the reaction L-threonyl-[protein] + ATP = O-phospho-L-threonyl-[protein] + ADP + H(+). Functionally, one of the three SNF1 protein kinases (with SAK1 and ELM1) which are required for growth on nonfermentable carbon sources and nonpreferred sugars and for response to environmental stress. Activates SNF1 by phosphorylation of its activation-loop 'Thr-210'. Required for the regulation by SNF1 of the transcription of a large set of genes, the modification the activity of metabolic enzymes, and the control of various nutrient-responsive cellular developmental processes. Also phosphorylates GAL83, MIG1 and SIP2. This chain is Serine/threonine-protein kinase TOS3 (TOS3), found in Saccharomyces cerevisiae (strain ATCC 204508 / S288c) (Baker's yeast).